We begin with the raw amino-acid sequence, 489 residues long: N-succinylglutamate 5-semialdehyde dehydrogenase (489 aa).

NAD(+) is bound at residue 216-221; the sequence is GSAATG. Active-site residues include Glu-239 and Cys-273.

It belongs to the aldehyde dehydrogenase family. AstD subfamily.

It carries out the reaction N-succinyl-L-glutamate 5-semialdehyde + NAD(+) + H2O = N-succinyl-L-glutamate + NADH + 2 H(+). It functions in the pathway amino-acid degradation; L-arginine degradation via AST pathway; L-glutamate and succinate from L-arginine: step 4/5. Its function is as follows. Catalyzes the NAD-dependent reduction of succinylglutamate semialdehyde into succinylglutamate. In Erwinia tasmaniensis (strain DSM 17950 / CFBP 7177 / CIP 109463 / NCPPB 4357 / Et1/99), this protein is N-succinylglutamate 5-semialdehyde dehydrogenase.